The primary structure comprises 110 residues: U12-hexatoxin-Hi1a (110 aa).

An N-terminal signal peptide occupies residues 1-18 (MRVALVFLVLSILAATHG). 3 disulfide bridges follow: C72–C86, C79–C91, and C85–C104.

As to expression, expressed by the venom gland.

Its subcellular location is the secreted. In terms of biological role, probable ion channel inhibitor. This chain is U12-hexatoxin-Hi1a, found in Hadronyche infensa (Fraser island funnel-web spider).